We begin with the raw amino-acid sequence, 159 residues long: 2-C-methyl-D-erythritol 2,4-cyclodiphosphate synthase (159 aa).

Positions 8 and 10 each coordinate a divalent metal cation. Residues 8 to 10 (DVH) and 34 to 35 (HS) each bind 4-CDP-2-C-methyl-D-erythritol 2-phosphate. H42 serves as a coordination point for a divalent metal cation. 4-CDP-2-C-methyl-D-erythritol 2-phosphate-binding positions include 56 to 58 (DIG), 61 to 65 (FPDTD), 100 to 106 (AQAPKML), 132 to 135 (TTTE), F139, and R142.

The protein belongs to the IspF family. In terms of assembly, homotrimer. A divalent metal cation serves as cofactor.

The enzyme catalyses 4-CDP-2-C-methyl-D-erythritol 2-phosphate = 2-C-methyl-D-erythritol 2,4-cyclic diphosphate + CMP. The protein operates within isoprenoid biosynthesis; isopentenyl diphosphate biosynthesis via DXP pathway; isopentenyl diphosphate from 1-deoxy-D-xylulose 5-phosphate: step 4/6. Its function is as follows. Involved in the biosynthesis of isopentenyl diphosphate (IPP) and dimethylallyl diphosphate (DMAPP), two major building blocks of isoprenoid compounds. Catalyzes the conversion of 4-diphosphocytidyl-2-C-methyl-D-erythritol 2-phosphate (CDP-ME2P) to 2-C-methyl-D-erythritol 2,4-cyclodiphosphate (ME-CPP) with a corresponding release of cytidine 5-monophosphate (CMP). This Salmonella choleraesuis (strain SC-B67) protein is 2-C-methyl-D-erythritol 2,4-cyclodiphosphate synthase.